We begin with the raw amino-acid sequence, 472 residues long: Bifunctional protein HldE (472 aa).

The interval 1 to 315 is ribokinase; it reads MAKRVKILVV…QLLNSSFGAN (315 aa). 192–195 lines the ATP pocket; it reads NKKE. Residue Asp-260 is part of the active site. Residues 340-472 form a cytidylyltransferase region; the sequence is FTNGCFDILH…IKDAKNDDKK (133 aa).

In the N-terminal section; belongs to the carbohydrate kinase PfkB family. The protein in the C-terminal section; belongs to the cytidylyltransferase family. In terms of assembly, homodimer.

The enzyme catalyses D-glycero-beta-D-manno-heptose 7-phosphate + ATP = D-glycero-beta-D-manno-heptose 1,7-bisphosphate + ADP + H(+). It catalyses the reaction D-glycero-beta-D-manno-heptose 1-phosphate + ATP + H(+) = ADP-D-glycero-beta-D-manno-heptose + diphosphate. Its pathway is nucleotide-sugar biosynthesis; ADP-L-glycero-beta-D-manno-heptose biosynthesis; ADP-L-glycero-beta-D-manno-heptose from D-glycero-beta-D-manno-heptose 7-phosphate: step 1/4. It participates in nucleotide-sugar biosynthesis; ADP-L-glycero-beta-D-manno-heptose biosynthesis; ADP-L-glycero-beta-D-manno-heptose from D-glycero-beta-D-manno-heptose 7-phosphate: step 3/4. Catalyzes the phosphorylation of D-glycero-D-manno-heptose 7-phosphate at the C-1 position to selectively form D-glycero-beta-D-manno-heptose-1,7-bisphosphate. In terms of biological role, catalyzes the ADP transfer from ATP to D-glycero-beta-D-manno-heptose 1-phosphate, yielding ADP-D-glycero-beta-D-manno-heptose. This Campylobacter concisus (strain 13826) protein is Bifunctional protein HldE.